The following is an 874-amino-acid chain: Alanine--tRNA ligase (874 aa).

Zn(2+) contacts are provided by His-562, His-566, Cys-664, and His-668.

This sequence belongs to the class-II aminoacyl-tRNA synthetase family. It depends on Zn(2+) as a cofactor.

Its subcellular location is the cytoplasm. The catalysed reaction is tRNA(Ala) + L-alanine + ATP = L-alanyl-tRNA(Ala) + AMP + diphosphate. Its function is as follows. Catalyzes the attachment of alanine to tRNA(Ala) in a two-step reaction: alanine is first activated by ATP to form Ala-AMP and then transferred to the acceptor end of tRNA(Ala). Also edits incorrectly charged Ser-tRNA(Ala) and Gly-tRNA(Ala) via its editing domain. This chain is Alanine--tRNA ligase, found in Shewanella sediminis (strain HAW-EB3).